Consider the following 439-residue polypeptide: Glutamate-1-semialdehyde 2,1-aminomutase (439 aa).

K279 bears the N6-(pyridoxal phosphate)lysine mark.

This sequence belongs to the class-III pyridoxal-phosphate-dependent aminotransferase family. HemL subfamily. As to quaternary structure, homodimer. Pyridoxal 5'-phosphate serves as cofactor.

Its subcellular location is the cytoplasm. It carries out the reaction (S)-4-amino-5-oxopentanoate = 5-aminolevulinate. The protein operates within porphyrin-containing compound metabolism; protoporphyrin-IX biosynthesis; 5-aminolevulinate from L-glutamyl-tRNA(Glu): step 2/2. The sequence is that of Glutamate-1-semialdehyde 2,1-aminomutase from Rhodopirellula baltica (strain DSM 10527 / NCIMB 13988 / SH1).